A 275-amino-acid polypeptide reads, in one-letter code: MIRMIRKFKVKGLRSPSLLIDMILNDTEEGILVVETDGEEQIKDIEKLLKKYNLKYEVDGNVVKIYVGEIKADKTINVVGATCPGPIMMVSDMLSKMKNGEILEIICGKNSLTDLTEGLKGMGNEIIKVEDKGDGTYRILVKKGEKKEEKAAVTKIDELFIINTTGTGNAEKAYATFMMADVALKMNLKPTIFLMMDGASLALKGECDRVKHPAFPKLGDLVRDILSKGVKIYVCELSAEFRGINEKNLEEGFEIAGAPTFLNYLSKPNVRPVWL.

This is an uncharacterized protein from Methanocaldococcus jannaschii (strain ATCC 43067 / DSM 2661 / JAL-1 / JCM 10045 / NBRC 100440) (Methanococcus jannaschii).